Here is a 493-residue protein sequence, read N- to C-terminus: Glutamate--tRNA ligase (493 aa).

The 'HIGH' region motif lies at 10–20 (PSPTGDPHVGT). Zn(2+)-binding residues include cysteine 107, cysteine 109, cysteine 134, and histidine 136. The 'KMSKS' region motif lies at 251–255 (KLSKR). Lysine 254 contributes to the ATP binding site.

This sequence belongs to the class-I aminoacyl-tRNA synthetase family. Glutamate--tRNA ligase type 1 subfamily. Monomer. Zn(2+) is required as a cofactor.

Its subcellular location is the cytoplasm. It catalyses the reaction tRNA(Glu) + L-glutamate + ATP = L-glutamyl-tRNA(Glu) + AMP + diphosphate. Its function is as follows. Catalyzes the attachment of glutamate to tRNA(Glu) in a two-step reaction: glutamate is first activated by ATP to form Glu-AMP and then transferred to the acceptor end of tRNA(Glu). This is Glutamate--tRNA ligase from Ectopseudomonas mendocina (strain ymp) (Pseudomonas mendocina).